The primary structure comprises 328 residues: Cytochrome c biogenesis protein CcsA (328 aa).

8 consecutive transmembrane segments (helical) span residues Ile13 to Leu33, Gly46 to Gly66, Leu73 to Phe93, Leu101 to Leu121, Met146 to Ile166, Ile234 to Asn254, Trp263 to Ile283, and Ala295 to Leu315.

This sequence belongs to the CcmF/CycK/Ccl1/NrfE/CcsA family. May interact with Ccs1.

The protein localises to the plastid. The protein resides in the chloroplast thylakoid membrane. Its function is as follows. Required during biogenesis of c-type cytochromes (cytochrome c6 and cytochrome f) at the step of heme attachment. In Aethionema grandiflorum (Persian stone-cress), this protein is Cytochrome c biogenesis protein CcsA.